Reading from the N-terminus, the 413-residue chain is Arogenate dehydratase/prephenate dehydratase 6, chloroplastic (413 aa).

The transit peptide at 1-44 (MKALSSSSPILGASQPATATALIARSGRSEWQSSCAILTSKVIS) directs the protein to the chloroplast. Residues 117 to 294 (RVAYQGVPGA…NVTRFVMLAR (178 aa)) enclose the Prephenate dehydratase domain. An ACT domain is found at 308-399 (SIVFAHEKGT…SFLRVLGSYP (92 aa)).

In terms of tissue distribution, expressed in roots, leaves, stems, flowers and siliques.

The protein localises to the plastid. It localises to the chloroplast stroma. It carries out the reaction L-arogenate + H(+) = L-phenylalanine + CO2 + H2O. It catalyses the reaction prephenate + H(+) = 3-phenylpyruvate + CO2 + H2O. Its pathway is amino-acid biosynthesis; L-phenylalanine biosynthesis; L-phenylalanine from L-arogenate: step 1/1. It functions in the pathway amino-acid biosynthesis; L-phenylalanine biosynthesis; phenylpyruvate from prephenate: step 1/1. In terms of biological role, converts the prephenate produced from the shikimate-chorismate pathway into phenylalanine. Dehydratase that uses arogenate and prephenate as substrates. Utilzes more efficiently arogenate than prephenate. In Arabidopsis thaliana (Mouse-ear cress), this protein is Arogenate dehydratase/prephenate dehydratase 6, chloroplastic.